A 222-amino-acid chain; its full sequence is Phosphoribosylformylglycinamidine synthase subunit PurQ (222 aa).

The region spanning 2–222 (KAAVITFPGS…RALLGGMALV (221 aa)) is the Glutamine amidotransferase type-1 domain. The active-site Nucleophile is the Cys-86. Catalysis depends on residues His-194 and Glu-196.

Part of the FGAM synthase complex composed of 1 PurL, 1 PurQ and 2 PurS subunits.

Its subcellular location is the cytoplasm. The enzyme catalyses N(2)-formyl-N(1)-(5-phospho-beta-D-ribosyl)glycinamide + L-glutamine + ATP + H2O = 2-formamido-N(1)-(5-O-phospho-beta-D-ribosyl)acetamidine + L-glutamate + ADP + phosphate + H(+). It carries out the reaction L-glutamine + H2O = L-glutamate + NH4(+). The protein operates within purine metabolism; IMP biosynthesis via de novo pathway; 5-amino-1-(5-phospho-D-ribosyl)imidazole from N(2)-formyl-N(1)-(5-phospho-D-ribosyl)glycinamide: step 1/2. Functionally, part of the phosphoribosylformylglycinamidine synthase complex involved in the purines biosynthetic pathway. Catalyzes the ATP-dependent conversion of formylglycinamide ribonucleotide (FGAR) and glutamine to yield formylglycinamidine ribonucleotide (FGAM) and glutamate. The FGAM synthase complex is composed of three subunits. PurQ produces an ammonia molecule by converting glutamine to glutamate. PurL transfers the ammonia molecule to FGAR to form FGAM in an ATP-dependent manner. PurS interacts with PurQ and PurL and is thought to assist in the transfer of the ammonia molecule from PurQ to PurL. In Cereibacter sphaeroides (strain ATCC 17023 / DSM 158 / JCM 6121 / CCUG 31486 / LMG 2827 / NBRC 12203 / NCIMB 8253 / ATH 2.4.1.) (Rhodobacter sphaeroides), this protein is Phosphoribosylformylglycinamidine synthase subunit PurQ.